The primary structure comprises 145 residues: Mannitol-specific phosphotransferase enzyme IIA component (145 aa).

The 141-residue stretch at 4 to 144 (PILKKENIVL…EEILSILNEV (141 aa)) folds into the PTS EIIA type-2 domain. H64 (tele-phosphohistidine intermediate) is an active-site residue. At H64 the chain carries Phosphohistidine; by HPr.

The protein localises to the cytoplasm. Functionally, the phosphoenolpyruvate-dependent sugar phosphotransferase system (sugar PTS), a major carbohydrate active transport system, catalyzes the phosphorylation of incoming sugar substrates concomitantly with their translocation across the cell membrane. The enzyme II CmtAB PTS system is involved in D-mannitol transport. This chain is Mannitol-specific phosphotransferase enzyme IIA component, found in Geobacillus stearothermophilus (Bacillus stearothermophilus).